The sequence spans 233 residues: MGEPQQVSALPPPPMQYIKEYTDENIQEGLAPKPPPPIKDSYMMFGNQFQCDDLIIRPLESQGIERLHPMQFDHKKELRKLNMSILINFLDLLDILIRSPGSIKREEKLEDLKLLFVHVHHLINEYRPHQARETLRVMMEVQKRQRLETAERFQKHLERVIEMIQNCLASLPDDLPHSEAGMRVKAEPMDADDSNNCTGQSDQQRENSGHRRDQIIEKDAALCVLIDEMNERP.

Lys185 participates in a covalent cross-link: Glycyl lysine isopeptide (Lys-Gly) (interchain with G-Cter in SUMO1); alternate. Residue Lys185 forms a Glycyl lysine isopeptide (Lys-Gly) (interchain with G-Cter in SUMO2); alternate linkage. Residues 188–213 (PMDADDSNNCTGQSDQQRENSGHRRD) form a disordered region. Ser194 carries the phosphoserine modification. Over residues 203–213 (QQRENSGHRRD) the composition is skewed to basic and acidic residues.

Belongs to the Mediator complex subunit 7 family. Component of the Mediator complex, which is composed of MED1, MED4, MED6, MED7, MED8, MED9, MED10, MED11, MED12, MED13, MED13L, MED14, MED15, MED16, MED17, MED18, MED19, MED20, MED21, MED22, MED23, MED24, MED25, MED26, MED27, MED29, MED30, MED31, CCNC, CDK8 and CDC2L6/CDK11. The MED12, MED13, CCNC and CDK8 subunits form a distinct module termed the CDK8 module. Mediator containing the CDK8 module is less active than Mediator lacking this module in supporting transcriptional activation. Individual preparations of the Mediator complex lacking one or more distinct subunits have been variously termed ARC, CRSP, DRIP, PC2, SMCC and TRAP.

The protein resides in the nucleus. Component of the Mediator complex, a coactivator involved in the regulated transcription of nearly all RNA polymerase II-dependent genes. Mediator functions as a bridge to convey information from gene-specific regulatory proteins to the basal RNA polymerase II transcription machinery. Mediator is recruited to promoters by direct interactions with regulatory proteins and serves as a scaffold for the assembly of a functional preinitiation complex with RNA polymerase II and the general transcription factors. This Sus scrofa (Pig) protein is Mediator of RNA polymerase II transcription subunit 7 (MED7).